We begin with the raw amino-acid sequence, 338 residues long: tRNA (cytosine(34)-C(5))-methyltransferase, mitochondrial (338 aa).

S-adenosyl-L-methionine-binding positions include 140–146, E163, D194, and D212; that span reads CAAPGGK. Catalysis depends on C266, which acts as the Nucleophile.

The protein belongs to the class I-like SAM-binding methyltransferase superfamily. RsmB/NOP family.

It localises to the mitochondrion matrix. It carries out the reaction cytidine(34) in mitochondrial tRNA + S-adenosyl-L-methionine = 5-methylcytidine(34) in mitochondrial tRNA + S-adenosyl-L-homocysteine + H(+). Its function is as follows. Mitochondrial tRNA methyltransferase that mediates methylation of cytosine to 5-methylcytosine (m5C) at position 34 of mt-tRNA(Met). mt-tRNA(Met) methylation at cytosine(34) takes place at the wobble position of the anticodon and initiates the formation of 5-formylcytosine (f(5)c) at this position. mt-tRNA(Met) containing the f(5)c modification at the wobble position enables recognition of the AUA codon in addition to the AUG codon, expanding codon recognition in mitochondrial translation. This chain is tRNA (cytosine(34)-C(5))-methyltransferase, mitochondrial, found in Bos taurus (Bovine).